The sequence spans 612 residues: Zinc metalloproteinase-disintegrin-like berythractivase (612 aa).

A signal peptide spans 1-20 (MIQVLLVIICLEAFPYQGSS). Positions 21–187 (IILESGNVND…EPIKKASLLN (167 aa)) are excised as a propeptide. The Peptidase M12B domain maps to 200-396 (KYVEFVVVLD…NRPQCLLNKP (197 aa)). E203 is a Ca(2+) binding site. N-linked (GlcNAc...) asparagine glycosylation occurs at N260. D287 is a binding site for Ca(2+). Disulfide bonds link C311–C391, C351–C375, and C353–C358. H336 lines the Zn(2+) pocket. The active site involves E337. Residues H340 and H346 each contribute to the Zn(2+) site. N348 carries an N-linked (GlcNAc...) asparagine glycan. A glycan (N-linked (GlcNAc...) asparagine) is linked at N374. C391, N394, V406, N409, L411, E413, E416, and D419 together coordinate Ca(2+). The Disintegrin domain occupies 404 to 490 (PPVCGNELLE…DCPMDDFQRN (87 aa)). 14 disulfides stabilise this stretch: C407–C436, C418–C431, C420–C426, C430–C453, C444–C450, C449–C475, C462–C482, C469–C501, C494–C506, C513–C563, C528–C574, C541–C551, C558–C600, and C594–C605. Residue N432 is glycosylated (N-linked (GlcNAc...) asparagine). Positions 468-470 (DCD) match the D/ECD-tripeptide motif. The Ca(2+) site is built by D470, L471, E473, and D485.

It belongs to the venom metalloproteinase (M12B) family. P-III subfamily. P-IIIa sub-subfamily. Monomer. Zn(2+) serves as cofactor. Post-translationally, highly glycosylated. Expressed by the venom gland.

It is found in the secreted. Inhibited by EDTA and o-phenanthroline. Not inhibited by PMSF, benzamidine, irreversible serine-proteinase inhibitors and cysteine proteinase inhibitor E-64. Functionally, potent activator of prothrombin (F2). Does not elicit any hemorrhagic response. Barely inhibits collagen-induced platelet aggregation. Binds neither collagen, nor the jararhagin monoclonal antibody MAJar3. Hydrolyzes the Aalpha-chain of fibrin and fibrinogen, without affecting the Bbeta- and gamma-chains. Is capable of triggering endothelial pro-inflammatory and procoagulant cell responses, but fails to trigger apoptosis. Induces von Willebrand factor release, and the expression of both ICAM1 and E-selectin (SELE) (without increase in VCAM1) in endothelial cells (HUVEC). Is also able to up-regulate the synthesis of the coagulation factor TF (F3). Enhances nitric oxide (NO) generation, prostacyclin production and interleukin-8 release. This Bothrops erythromelas (Caatinga lance head) protein is Zinc metalloproteinase-disintegrin-like berythractivase.